Here is a 309-residue protein sequence, read N- to C-terminus: Ribosomal RNA small subunit methyltransferase H (309 aa).

Residues 33-35 (GGH), Asp53, Phe79, Asp100, and Gln107 contribute to the S-adenosyl-L-methionine site.

It belongs to the methyltransferase superfamily. RsmH family.

Its subcellular location is the cytoplasm. It catalyses the reaction cytidine(1402) in 16S rRNA + S-adenosyl-L-methionine = N(4)-methylcytidine(1402) in 16S rRNA + S-adenosyl-L-homocysteine + H(+). Functionally, specifically methylates the N4 position of cytidine in position 1402 (C1402) of 16S rRNA. This is Ribosomal RNA small subunit methyltransferase H from Clostridium botulinum (strain 657 / Type Ba4).